A 430-amino-acid polypeptide reads, in one-letter code: Trigger factor (430 aa).

Positions 163 to 248 (GDIAVIDFEG…LNSLKRKNMP (86 aa)) constitute a PPIase FKBP-type domain.

This sequence belongs to the FKBP-type PPIase family. Tig subfamily.

The protein localises to the cytoplasm. The catalysed reaction is [protein]-peptidylproline (omega=180) = [protein]-peptidylproline (omega=0). Its function is as follows. Involved in protein export. Acts as a chaperone by maintaining the newly synthesized protein in an open conformation. Functions as a peptidyl-prolyl cis-trans isomerase. This is Trigger factor from Brevibacillus brevis (strain 47 / JCM 6285 / NBRC 100599).